We begin with the raw amino-acid sequence, 76 residues long: Small ribosomal subunit protein bS18 (76 aa).

Belongs to the bacterial ribosomal protein bS18 family. In terms of assembly, part of the 30S ribosomal subunit. Forms a tight heterodimer with protein bS6.

Functionally, binds as a heterodimer with protein bS6 to the central domain of the 16S rRNA, where it helps stabilize the platform of the 30S subunit. The sequence is that of Small ribosomal subunit protein bS18 from Carboxydothermus hydrogenoformans (strain ATCC BAA-161 / DSM 6008 / Z-2901).